Reading from the N-terminus, the 320-residue chain is tRNA pseudouridine synthase B (320 aa).

Residue Asp-49 is the Nucleophile of the active site.

Belongs to the pseudouridine synthase TruB family. Type 1 subfamily.

The catalysed reaction is uridine(55) in tRNA = pseudouridine(55) in tRNA. In terms of biological role, responsible for synthesis of pseudouridine from uracil-55 in the psi GC loop of transfer RNAs. In Bartonella tribocorum (strain CIP 105476 / IBS 506), this protein is tRNA pseudouridine synthase B.